The following is a 361-amino-acid chain: Peptide chain release factor 1 (361 aa).

N5-methylglutamine is present on Q237. The span at 287–297 shows a compositional bias: basic and acidic residues; sequence KQQKEQSDTRK. The tract at residues 287–313 is disordered; sequence KQQKEQSDTRKSLVGSGDRSERIRTYN.

It belongs to the prokaryotic/mitochondrial release factor family. Methylated by PrmC. Methylation increases the termination efficiency of RF1.

Its subcellular location is the cytoplasm. Its function is as follows. Peptide chain release factor 1 directs the termination of translation in response to the peptide chain termination codons UAG and UAA. This Francisella tularensis subsp. novicida (strain U112) protein is Peptide chain release factor 1.